The chain runs to 392 residues: Heat-inducible transcription repressor HrcA (392 aa).

This sequence belongs to the HrcA family.

Negative regulator of class I heat shock genes (grpE-dnaK-dnaJ and groELS operons). Prevents heat-shock induction of these operons. This Chlamydia trachomatis serovar L2 (strain ATCC VR-902B / DSM 19102 / 434/Bu) protein is Heat-inducible transcription repressor HrcA.